Consider the following 434-residue polypeptide: Alpha-enolase (434 aa).

N-acetylserine is present on S2. At K5 the chain carries N6-acetyllysine. S40 contributes to the Mg(2+) binding site. Y44 carries the phosphotyrosine modification. Residue K60 is modified to N6-acetyllysine; alternate. An N6-succinyllysine; alternate modification is found at K60. K64 and K71 each carry N6-acetyllysine. N6-acetyllysine; alternate is present on K89. K89 is modified (N6-succinyllysine; alternate). Residue K126 is modified to N6-acetyllysine. Substrate is bound by residues H158 and E167. N6-acetyllysine is present on residues K193 and K199. N6-acetyllysine; alternate is present on K202. A Glycyl lysine isopeptide (Lys-Gly) (interchain with G-Cter in SUMO2); alternate cross-link involves residue K202. E210 (proton donor) is an active-site residue. N6-acetyllysine; alternate is present on residues K228 and K233. K228 is subject to N6-succinyllysine; alternate. N6-(2-hydroxyisobutyryl)lysine; alternate is present on K228. K233 is subject to N6-malonyllysine; alternate. A Mg(2+)-binding site is contributed by D245. K256 is subject to N6-acetyllysine. Residue S263 is modified to Phosphoserine. K281 is subject to N6-acetyllysine; alternate. Residue K281 is modified to N6-(2-hydroxyisobutyryl)lysine; alternate. K285 carries the N6-acetyllysine modification. Y287 bears the Phosphotyrosine mark. Residue S291 is modified to Phosphoserine. The Mg(2+) site is built by E293 and D318. Residues E293 and D318 each contribute to the substrate site. 2 positions are modified to N6-acetyllysine: K335 and K343. The Proton acceptor role is filled by K343. Residues 370–373 and K394 contribute to the substrate site; that span reads SHRS. Positions 405–434 are required for interaction with PLG; it reads AKYNQILRIEEELGSKAKFAGRSFRNPLAK. N6-acetyllysine is present on K406. Position 420 is an N6-acetyllysine; alternate (K420). K420 bears the N6-succinyllysine; alternate mark. K420 is subject to N6-malonyllysine; alternate.

This sequence belongs to the enolase family. In terms of assembly, mammalian enolase is composed of 3 isozyme subunits, alpha, beta and gamma, which can form homodimers or heterodimers which are cell-type and development-specific. ENO1 interacts with PLG in the neuronal plasma membrane and promotes its activation. The C-terminal lysine is required for this binding. Interacts with ENO4 and PGAM2. Interacts with CMTM6. It depends on Mg(2+) as a cofactor. In terms of processing, ISGylated. Post-translationally, lysine 2-hydroxyisobutyrylation (Khib) by p300/EP300 activates the phosphopyruvate hydratase activity. In terms of tissue distribution, expressed in flagella of epididymal sperm. The alpha/alpha homodimer is expressed in embryo and in most adult tissues. The alpha/beta heterodimer and the beta/beta homodimer are found in striated muscle, and the alpha/gamma heterodimer and the gamma/gamma homodimer in neurons.

It localises to the cytoplasm. Its subcellular location is the cell membrane. It carries out the reaction (2R)-2-phosphoglycerate = phosphoenolpyruvate + H2O. The protein operates within carbohydrate degradation; glycolysis; pyruvate from D-glyceraldehyde 3-phosphate: step 4/5. Glycolytic enzyme that catalyzes the conversion of 2-phosphoglycerate to phosphoenolpyruvate. In addition to glycolysis, involved in various processes such as growth control, hypoxia tolerance and allergic responses. May also function in the intravascular and pericellular fibrinolytic system due to its ability to serve as a receptor and activator of plasminogen on the cell surface of several cell-types such as leukocytes and neurons. Stimulates immunoglobulin production. This chain is Alpha-enolase (Eno1), found in Rattus norvegicus (Rat).